The sequence spans 131 residues: MVKEFAYRGIPKEELDNMSLEKLFQLFNARQRRSLTRGITDGKRKLIEEIKAAKAGKLKNPIKTHVRDLIILPYMVDVTVNVFSGKEFRPVTIRTEMIGHYLGEYVITNRKVSHGAPGVGASRSSLYVPLK.

The protein belongs to the universal ribosomal protein uS19 family.

Its function is as follows. Protein S19 forms a complex with S13 that binds strongly to the 16S ribosomal RNA. The polypeptide is Small ribosomal subunit protein uS19 (Nitrosopumilus maritimus (strain SCM1)).